The following is a 355-amino-acid chain: UDP-N-acetylglucosamine--N-acetylmuramyl-(pentapeptide) pyrophosphoryl-undecaprenol N-acetylglucosamine transferase (355 aa).

UDP-N-acetyl-alpha-D-glucosamine-binding positions include 12–14 (TGG), Asn-124, Arg-160, Ser-192, Ile-243, 262–267 (ALTVCE), and Gln-287.

This sequence belongs to the glycosyltransferase 28 family. MurG subfamily.

Its subcellular location is the cell inner membrane. It carries out the reaction di-trans,octa-cis-undecaprenyl diphospho-N-acetyl-alpha-D-muramoyl-L-alanyl-D-glutamyl-meso-2,6-diaminopimeloyl-D-alanyl-D-alanine + UDP-N-acetyl-alpha-D-glucosamine = di-trans,octa-cis-undecaprenyl diphospho-[N-acetyl-alpha-D-glucosaminyl-(1-&gt;4)]-N-acetyl-alpha-D-muramoyl-L-alanyl-D-glutamyl-meso-2,6-diaminopimeloyl-D-alanyl-D-alanine + UDP + H(+). It participates in cell wall biogenesis; peptidoglycan biosynthesis. Its function is as follows. Cell wall formation. Catalyzes the transfer of a GlcNAc subunit on undecaprenyl-pyrophosphoryl-MurNAc-pentapeptide (lipid intermediate I) to form undecaprenyl-pyrophosphoryl-MurNAc-(pentapeptide)GlcNAc (lipid intermediate II). This Haemophilus ducreyi (strain 35000HP / ATCC 700724) protein is UDP-N-acetylglucosamine--N-acetylmuramyl-(pentapeptide) pyrophosphoryl-undecaprenol N-acetylglucosamine transferase.